The following is a 149-amino-acid chain: MKARHKRLGLIVAGLAALGLGAALVLSAFQKNLVFFFTPSQVAAGEAPRNRSFRVGGMVEVGSIERQADGVTVSFLVTDTAQRLRVNYRGSLPDLFKEGKGVVAQGKLTADQLFVADEVLAKHDENYMPPEAAYALKQAGAPALAGALK.

Residues 1-7 are Cytoplasmic-facing; that stretch reads MKARHKR. The chain crosses the membrane as a helical; Signal-anchor for type II membrane protein span at residues 8–28; sequence LGLIVAGLAALGLGAALVLSA. Topologically, residues 29-149 are periplasmic; that stretch reads FQKNLVFFFT…GAPALAGALK (121 aa). Residues His123 and Tyr127 each coordinate heme.

This sequence belongs to the CcmE/CycJ family.

The protein localises to the cell inner membrane. Heme chaperone required for the biogenesis of c-type cytochromes. Transiently binds heme delivered by CcmC and transfers the heme to apo-cytochromes in a process facilitated by CcmF and CcmH. In Polaromonas naphthalenivorans (strain CJ2), this protein is Cytochrome c-type biogenesis protein CcmE.